We begin with the raw amino-acid sequence, 685 residues long: MNTELVAMEPGVSRNGVRTETTTNPSLGLHTYDIVVVVIYFVFVLAVGIWSSIRASRGTVGGYFLAGRSMTWWPIGASLMSSNVGSGLFIGLAGTGAAGGLAVGGFEWNATFLLLALGWIFVPVYIAAGVVTMPQYLKKRFGGQRIQVYMSVLSLILYIFTKISTDIFSGALFIQMALGWNLYLSTVILLVVTAVYTIAGGLTAVIYTDALQTVIMVGGALVLMFLGFQEVGWYPGLQQLYRQAIPNTTVPNTTCHLPRPDAFHMLRDPVNGDIPWPGLIFGLTVLATWCWCTDQVIVQRSLAAKNLSHAKGGSVLGGYLKILPMFFIVMPGMISRALYPDEVACVDPDICQRVCGARVGCSNIAYPKLVMALMPVGLRGLMIAVIMAALMSSLTSIFNSSSTLFAIDVWQRFRRQASEQELMVVGRLFVVFLVVISILWIPIIQSSNSGQLFDYIQSITSYLAPPITALFLLAIFCKRVNEPGAFWGLMFGLVVGILRMILEFSYSAPACGEMDRRPAVLKDFHYLYFALLLCGLTAIIIVVISFFTEPIPDDKLARLTWWTRNCAVSDLQKKTSVSVNNTEDDNSPGLAGRPVVEGPAGDEEEANTTQGPEQPGALHRSWGKWLWNWFCGLSGAPQQALSPAEKAVLEQKLTSIEEEPLWRRVCNINAIILLAINIFLWGYFA.

The disordered stretch occupies residues 1–20 (MNTELVAMEPGVSRNGVRTE). Topologically, residues 1–32 (MNTELVAMEPGVSRNGVRTETTTNPSLGLHTY) are extracellular. The helical transmembrane segment at 33 to 53 (DIVVVVIYFVFVLAVGIWSSI) threads the bilayer. The Cytoplasmic portion of the chain corresponds to 54 to 71 (RASRGTVGGYFLAGRSMT). The chain crosses the membrane as a helical span at residues 72-94 (WWPIGASLMSSNVGSGLFIGLAG). The Extracellular segment spans residues 95–110 (TGAAGGLAVGGFEWNA). Residues 111 to 131 (TFLLLALGWIFVPVYIAAGVV) form a helical membrane-spanning segment. Residues 132–153 (TMPQYLKKRFGGQRIQVYMSVL) are Cytoplasmic-facing. A helical transmembrane segment spans residues 154–174 (SLILYIFTKISTDIFSGALFI). The Extracellular portion of the chain corresponds to 175–186 (QMALGWNLYLST). The chain crosses the membrane as a helical span at residues 187-207 (VILLVVTAVYTIAGGLTAVIY). The Cytoplasmic segment spans residues 208-213 (TDALQT). Residues 214-234 (VIMVGGALVLMFLGFQEVGWY) form a helical membrane-spanning segment. Residues 235-271 (PGLQQLYRQAIPNTTVPNTTCHLPRPDAFHMLRDPVN) lie on the Extracellular side of the membrane. An N-linked (GlcNAc...) asparagine glycan is attached at asparagine 247. Residues 272-292 (GDIPWPGLIFGLTVLATWCWC) traverse the membrane as a helical segment. The Cytoplasmic portion of the chain corresponds to 293–313 (TDQVIVQRSLAAKNLSHAKGG). Residues 314–334 (SVLGGYLKILPMFFIVMPGMI) traverse the membrane as a helical segment. At 335–379 (SRALYPDEVACVDPDICQRVCGARVGCSNIAYPKLVMALMPVGLR) the chain is on the extracellular side. Residues 380 to 402 (GLMIAVIMAALMSSLTSIFNSSS) traverse the membrane as a helical segment. Residues 403–423 (TLFAIDVWQRFRRQASEQELM) are Cytoplasmic-facing. The chain crosses the membrane as a helical span at residues 424–444 (VVGRLFVVFLVVISILWIPII). The Extracellular segment spans residues 445–455 (QSSNSGQLFDY). Residues 456 to 476 (IQSITSYLAPPITALFLLAIF) traverse the membrane as a helical segment. Residues 477–483 (CKRVNEP) lie on the Cytoplasmic side of the membrane. The helical transmembrane segment at 484-504 (GAFWGLMFGLVVGILRMILEF) threads the bilayer. Residues 505-526 (SYSAPACGEMDRRPAVLKDFHY) are Extracellular-facing. The chain crosses the membrane as a helical span at residues 527 to 547 (LYFALLLCGLTAIIIVVISFF). The Cytoplasmic segment spans residues 548-664 (TEPIPDDKLA…SIEEEPLWRR (117 aa)). Residues 577 to 616 (VSVNNTEDDNSPGLAGRPVVEGPAGDEEEANTTQGPEQPG) are disordered. A helical membrane pass occupies residues 665–685 (VCNINAIILLAINIFLWGYFA).

The protein belongs to the sodium:solute symporter (SSF) (TC 2.A.21) family.

Its subcellular location is the cell membrane. It catalyses the reaction D-mannose(out) + n Na(+)(out) = D-mannose(in) + n Na(+)(in). Its function is as follows. Electrogenic Na(+)-coupled sugar symporter that may play a primary role in D-mannose and possibly D-fructose and D-glucose transport at the plasma membrane. Transporter activity is driven by a transmembrane Na(+) electrochemical gradient set by the Na(+)/K(+) pump. Exclusively recognizes sugar substrates having a pyranose ring with an axial hydroxyl group on carbon 2. The chain is Sodium/glucose cotransporter 4 (Slc5a9) from Mus musculus (Mouse).